A 226-amino-acid polypeptide reads, in one-letter code: Large ribosomal subunit protein uL1 (226 aa).

It belongs to the universal ribosomal protein uL1 family. In terms of assembly, part of the 50S ribosomal subunit.

Functionally, binds directly to 23S rRNA. Probably involved in E site tRNA release. Its function is as follows. Protein L1 is also a translational repressor protein, it controls the translation of its operon by binding to its mRNA. This chain is Large ribosomal subunit protein uL1, found in Korarchaeum cryptofilum (strain OPF8).